Consider the following 302-residue polypeptide: ATP synthase gamma chain (302 aa).

This sequence belongs to the ATPase gamma chain family. F-type ATPases have 2 components, CF(1) - the catalytic core - and CF(0) - the membrane proton channel. CF(1) has five subunits: alpha(3), beta(3), gamma(1), delta(1), epsilon(1). CF(0) has three main subunits: a, b and c.

Its subcellular location is the cell membrane. Functionally, produces ATP from ADP in the presence of a proton gradient across the membrane. The gamma chain is believed to be important in regulating ATPase activity and the flow of protons through the CF(0) complex. The sequence is that of ATP synthase gamma chain from Enterococcus faecalis (strain ATCC 700802 / V583).